A 714-amino-acid polypeptide reads, in one-letter code: Polyribonucleotide nucleotidyltransferase (714 aa).

Positions 486 and 492 each coordinate Mg(2+). The KH domain maps to 553–612; sequence PRIITMKINPEKIRDVIGKGGAVIRALTEETGTTIDIEEDGTIKIGCTSAEAGEEAKKRI. The S1 motif domain occupies 622–690; it reads GQVYDGTVLK…DKGRVRLSAK (69 aa).

Belongs to the polyribonucleotide nucleotidyltransferase family. It depends on Mg(2+) as a cofactor.

The protein localises to the cytoplasm. The catalysed reaction is RNA(n+1) + phosphate = RNA(n) + a ribonucleoside 5'-diphosphate. Functionally, involved in mRNA degradation. Catalyzes the phosphorolysis of single-stranded polyribonucleotides processively in the 3'- to 5'-direction. The chain is Polyribonucleotide nucleotidyltransferase from Methylobacillus flagellatus (strain ATCC 51484 / DSM 6875 / VKM B-1610 / KT).